The primary structure comprises 264 residues: 5'-nucleotidase SurE (264 aa).

The a divalent metal cation site is built by D10, D11, S43, and N99.

Belongs to the SurE nucleotidase family. Requires a divalent metal cation as cofactor.

It is found in the cytoplasm. The enzyme catalyses a ribonucleoside 5'-phosphate + H2O = a ribonucleoside + phosphate. Functionally, nucleotidase that shows phosphatase activity on nucleoside 5'-monophosphates. This is 5'-nucleotidase SurE from Methanococcus maripaludis (strain C7 / ATCC BAA-1331).